A 1290-amino-acid chain; its full sequence is MSRSQSPSLNDGLSTSNSRHSSSHSRFSLHKAFPQLSGNASFNGTSPKTKLPSRFSGGSNPPYMDSLKEQESSSSSSRSNFRRANYVNPGRIRSSGLKYSLQAPKELSSIDKINDPASRSIVISGKNHLGLYRFREDYGKLELTLDLFNIDQKAASLRTTTRKTSTISDVKAGFHNYKNYVAICGTSTSVSIYDINRANLVDGPASMVLSKHTRSINSVDFNMAQTSLLISGSQDGCIKVWDLRSSQGRKNKSDLTINSGSDSVRDVKWMPTYDFPNNDDVVAGPSNRSHRFASIHDSGLLLTYDLRQPSQAEKRINAHSGPGLCLSWHPTLDYIMTGGRDGKCCLWNMGSKPLNPASFQNIHHNSSFSTSAASSFTQGFSANSVTNFINSPEAVVNTAHPLTKLKFRPSAIPEVFDSVIALSSLGENSDVSLYSLSRSYIPKNVLTTNSPSCGFVWWNENLIFNIDKQNMVTGWDLGKEPTVLDNLPKNKIAWRDIEGDGLVFLAQDKGGYESGGPDGMSVSTETRNFSQSRLSTTTMSNLFPSHTMRQNSSVSSFPALNTHSNSGANLGDRPSLPRTVTSYSKGAYTQTYGSYNTHSSHHNSAASASASSIATELGSEHVLSPRMISLDLPHILNSIRSAKIENYAKKPSRPGSAAFKDSPVEVFKFLSRELKFSYMHDRNFNKPENLTDQDDLAQSVDDNDLKSHLITRFGFSENNTWTKFIKKSNSPEKDAAVENGTKVNEASIEKVTNSPNDTGSDELSSISKLSTEPKKSDLAERNITAIRQRVKHFIELVSMCDHNAEIYLYIDDLSNFKIWMMMRDSLLWELKQITDSLETDGGSLLSESLLVNPDVTRHSNGARKQSMASDYSSFSTSEVGSTTGVQALPEFRGPHSLSTPPRATTSFGAKEPSSLKKRESTIDENLSETEIEAKGLPKEDIKNLRNQISKHQIGDEVAIEDEEEDKFEEKSSAGTDASNKNIPIIPSERKVSFVDQFINSMRSPKTLHGDFETDGSRMANSASTKRSSQPSFSSSLAGLITRRLSDQSPKTKPKDLIYSKSSGSIAKNSSDLFDFQNVEGNNSPRVLTQKSKISMLLKGLKKSETAPPWDASRLIKKIFEQSVATGNVLLTISIILLFQTTFKVTSTTVVKNALSEFINILHKYELFEIAANLLKFCPWDDILEAGNGQCTVRIYCERCKKLLVNESSKEKFTEEWKRTGRQEVMKRFGYWYCDNCSKRNTLCVLCEQPLKKLTFCVLNCGHEGHPECFKKWFMNEEMSECPSGCSGFLL.

2 stretches are compositionally biased toward polar residues: residues 1–13 (MSRSQSPSLNDGL) and 36–48 (LSGNASFNGTSPK). A disordered region spans residues 1-87 (MSRSQSPSLN…RSNFRRANYV (87 aa)). WD repeat units lie at residues 162–203 (RKTS…LVDG), 211–251 (KHTR…GRKN), 259–314 (SGSD…QAEK), 318–357 (AHSGPGLCLSWHPTLDYIMTGGRDGKCCLWNMGSKPLNPA), 397–444 (NTAH…IPKN), and 447–485 (TTNSPSCGFVWWNENLIFNIDKQNMVTGWDLGKEPTVLD). Positions 732 to 774 (EKDAAVENGTKVNEASIEKVTNSPNDTGSDELSSISKLSTEPK) are disordered. The span at 750–770 (KVTNSPNDTGSDELSSISKLS) shows a compositional bias: polar residues. WD repeat units lie at residues 778–819 (LAER…FKIW) and 821–842 (MMRDSLLWELKQITDSLETDGG). 3 disordered regions span residues 856-924 (TRHS…TIDE), 960-984 (EDEEEDKFEEKSSAGTDASNKNIPI), and 1004-1034 (PKTLHGDFETDGSRMANSASTKRSSQPSFSS). Composition is skewed to polar residues over residues 858–885 (HSNGARKQSMASDYSSFSTSEVGSTTGV), 896–907 (SLSTPPRATTSF), 972–981 (SAGTDASNKN), and 1018–1034 (MANSASTKRSSQPSFSS). 2 WD repeats span residues 1079–1119 (EGNN…KKIF) and 1166–1205 (LFEIAANLLKFCPWDDILEAGNGQCTVRIYCERCKKLLVN). Residues 1243-1285 (CVLCEQPLKKLTFCVLNCGHEGHPECFKKWFMNEEMSECPSGC) form an RING-type; degenerate zinc finger.

Belongs to the WD repeat RTC1 family.

It localises to the vacuole. May be involved in a process influencing telomere capping. The polypeptide is Restriction of telomere capping protein 1 (RTC1) (Lachancea thermotolerans (strain ATCC 56472 / CBS 6340 / NRRL Y-8284) (Yeast)).